The following is a 224-amino-acid chain: Glutathione S-transferase U8 (224 aa).

The GST N-terminal domain occupies 5–85 (EHVKLLGLWG…YIEDTWKTTH (81 aa)). Glutathione contacts are provided by residues 15–16 (SP), 42–43 (NR), 56–57 (KV), and 69–70 (ES). The region spanning 91–213 (DPYERAMARF…LPPKEKLVAV (123 aa)) is the GST C-terminal domain. A Phosphothreonine modification is found at T152.

It belongs to the GST superfamily. Tau family.

Its subcellular location is the cytoplasm. The protein resides in the cytosol. The enzyme catalyses RX + glutathione = an S-substituted glutathione + a halide anion + H(+). Its function is as follows. May be involved in the conjugation of reduced glutathione to a wide number of exogenous and endogenous hydrophobic electrophiles and have a detoxification role against certain herbicides. The sequence is that of Glutathione S-transferase U8 (GSTU8) from Arabidopsis thaliana (Mouse-ear cress).